We begin with the raw amino-acid sequence, 206 residues long: Photosynthetic reaction center cytochrome c-551 (206 aa).

The next 3 membrane-spanning stretches (helical) occupy residues 10–30 (IALAIGGAVLMGTLFFLVSFL), 49–69 (FMGWFLLIFCASLIIMGLGKM), and 76–96 (KWFLSFPLSIFVIVMVMFFSL). C152, C155, H156, and M182 together coordinate heme.

Component of the photosynthetic reaction center. The reaction center interacts with the Fenna-Matthews-Olson (FMO, fmoA) complex. Post-translationally, binds 1 heme group per subunit.

It is found in the cell inner membrane. In terms of biological role, monoheme cytochrome which is the immediate electron donor to P840 of the photosynthetic reaction center complex. The polypeptide is Photosynthetic reaction center cytochrome c-551 (pscC) (Chlorobaculum parvum (strain DSM 263 / NCIMB 8327) (Chlorobium vibrioforme subsp. thiosulfatophilum)).